The sequence spans 218 residues: Ribose-5-phosphate isomerase A (218 aa).

Substrate contacts are provided by residues 28–31, 81–84, and 94–97; these read TGST, DGAD, and KGGG. The active-site Proton acceptor is the Glu103. Position 121 (Lys121) interacts with substrate.

This sequence belongs to the ribose 5-phosphate isomerase family. As to quaternary structure, homodimer.

The catalysed reaction is aldehydo-D-ribose 5-phosphate = D-ribulose 5-phosphate. Its pathway is carbohydrate degradation; pentose phosphate pathway; D-ribose 5-phosphate from D-ribulose 5-phosphate (non-oxidative stage): step 1/1. Functionally, catalyzes the reversible conversion of ribose-5-phosphate to ribulose 5-phosphate. This chain is Ribose-5-phosphate isomerase A, found in Vibrio atlanticus (strain LGP32) (Vibrio splendidus (strain Mel32)).